Here is a 167-residue protein sequence, read N- to C-terminus: Small ribosomal subunit protein uS5 (167 aa).

Positions L12–V75 constitute an S5 DRBM domain.

Belongs to the universal ribosomal protein uS5 family. In terms of assembly, part of the 30S ribosomal subunit. Contacts proteins S4 and S8.

Its function is as follows. With S4 and S12 plays an important role in translational accuracy. Located at the back of the 30S subunit body where it stabilizes the conformation of the head with respect to the body. This is Small ribosomal subunit protein uS5 from Listeria innocua serovar 6a (strain ATCC BAA-680 / CLIP 11262).